A 425-amino-acid polypeptide reads, in one-letter code: Tyrosine--tRNA ligase (425 aa).

Tyr-33 is an L-tyrosine binding site. Positions 38–47 (PTADSLHLGN) match the 'HIGH' region motif. 2 residues coordinate L-tyrosine: Tyr-170 and Gln-174. The 'KMSKS' region signature appears at 230-234 (KFGKS). Lys-233 lines the ATP pocket. Positions 356–422 (KKLIDLLVET…GKKNKMIIRL (67 aa)) constitute an S4 RNA-binding domain.

This sequence belongs to the class-I aminoacyl-tRNA synthetase family. TyrS type 1 subfamily. As to quaternary structure, homodimer.

It is found in the cytoplasm. The catalysed reaction is tRNA(Tyr) + L-tyrosine + ATP = L-tyrosyl-tRNA(Tyr) + AMP + diphosphate + H(+). Catalyzes the attachment of tyrosine to tRNA(Tyr) in a two-step reaction: tyrosine is first activated by ATP to form Tyr-AMP and then transferred to the acceptor end of tRNA(Tyr). This Protochlamydia amoebophila (strain UWE25) protein is Tyrosine--tRNA ligase.